The chain runs to 247 residues: UPF0309 protein lin2794 (247 aa).

The region spanning 31 to 214 is the SIS domain; that stretch reads VAESIENDGV…EKMVNDNFTP (184 aa).

The protein belongs to the UPF0309 family.

The sequence is that of UPF0309 protein lin2794 from Listeria innocua serovar 6a (strain ATCC BAA-680 / CLIP 11262).